We begin with the raw amino-acid sequence, 261 residues long: 14-3-3-like protein A (261 aa).

Belongs to the 14-3-3 family.

This chain is 14-3-3-like protein A, found in Vicia faba (Broad bean).